Here is a 155-residue protein sequence, read N- to C-terminus: Transcriptional repressor NrdR (155 aa).

A zinc finger spans residues 3 to 34 (CPFCQHDDTQVLDTRVSEEGDSIRRRRRCTSC). The 91-residue stretch at 49–139 (PVVVKKNGSR…VYKSFEDVAE (91 aa)) folds into the ATP-cone domain.

This sequence belongs to the NrdR family. The cofactor is Zn(2+).

Its function is as follows. Negatively regulates transcription of bacterial ribonucleotide reductase nrd genes and operons by binding to NrdR-boxes. The chain is Transcriptional repressor NrdR from Janthinobacterium sp. (strain Marseille) (Minibacterium massiliensis).